The sequence spans 92 residues: Small ribosomal subunit protein uS19c (92 aa).

This sequence belongs to the universal ribosomal protein uS19 family.

It localises to the plastid. It is found in the chloroplast. Protein S19 forms a complex with S13 that binds strongly to the 16S ribosomal RNA. The chain is Small ribosomal subunit protein uS19c from Oedogonium cardiacum (Filamentous green alga).